The primary structure comprises 625 residues: Probable potassium transport system protein Kup (625 aa).

12 helical membrane passes run 13-33, 53-73, 103-123, 141-161, 172-192, 206-226, 250-270, 282-302, 340-360, 369-389, 400-420, and 422-442; these read TALAALGVVFGDIGTSPLYAL, ILSIIFWCLMLIISIKYVAIV, IYMIAIGFIGASLFFGDGIIT, VFDPFIMPIAIAIIVTLFLVQ, FGPITLVWFLSLGILGIHSVI, AIQFIYHHPIMTFFVMGAVVL, WFFVVLPCLVLNYAGQGALLL, LLVPQWALYPMIIMATMATVI, IYVPFLNWLLLIAIIILILIF, AYGLAVTLTMLCDTILVAVFI, VLILIIPFFILESVLVGATSL, and ILSGGWVPLLIGAIAVTILMT.

The protein belongs to the HAK/KUP transporter (TC 2.A.72) family.

It is found in the cell inner membrane. It carries out the reaction K(+)(in) + H(+)(in) = K(+)(out) + H(+)(out). Transport of potassium into the cell. Likely operates as a K(+):H(+) symporter. This Acinetobacter baumannii (strain SDF) protein is Probable potassium transport system protein Kup.